Consider the following 747-residue polypeptide: DNA ligase 1 (747 aa).

The interval 1–84 (MQKSITSFFK…KEVDDKTTDK (84 aa)) is disordered. 7 positions are modified to phosphoserine: Ser-18, Ser-20, Ser-42, Ser-44, Ser-46, Ser-60, and Ser-65. The span at 26 to 42 (PKIDAKTELPDEPHIKS) shows a compositional bias: basic and acidic residues. Basic and acidic residues predominate over residues 60–84 (SEEKTSPVKNVKKEPKEVDDKTTDK). Catalysis depends on Lys-395, which acts as the N6-AMP-lysine intermediate. Positions 725 to 740 (QSQDQVKNNQKSSTQM) are enriched in polar residues. The segment at 725-747 (QSQDQVKNNQKSSTQMEMEDEFY) is disordered.

Belongs to the ATP-dependent DNA ligase family.

It is found in the nucleus. The catalysed reaction is ATP + (deoxyribonucleotide)n-3'-hydroxyl + 5'-phospho-(deoxyribonucleotide)m = (deoxyribonucleotide)n+m + AMP + diphosphate.. Functionally, DNA ligase that seals nicks in double-stranded DNA during DNA replication, DNA recombination and DNA repair. This is DNA ligase 1 from Drosophila melanogaster (Fruit fly).